The chain runs to 175 residues: UPF0398 protein SUB1405 (175 aa).

This sequence belongs to the UPF0398 family.

This chain is UPF0398 protein SUB1405, found in Streptococcus uberis (strain ATCC BAA-854 / 0140J).